Reading from the N-terminus, the 332-residue chain is Arabinogalactan endo-beta-1,4-galactanase (332 aa).

Asparagine 111 is a glycosylation site (N-linked (GlcNAc...) asparagine). Catalysis depends on glutamate 135, which acts as the Proton donor. The active-site Nucleophile is the glutamate 245.

The protein belongs to the glycosyl hydrolase 53 family.

It carries out the reaction The enzyme specifically hydrolyzes (1-&gt;4)-beta-D-galactosidic linkages in type I arabinogalactans.. This Humicola insolens (Soft-rot fungus) protein is Arabinogalactan endo-beta-1,4-galactanase.